The chain runs to 202 residues: ATP-dependent Clp protease proteolytic subunit (202 aa).

The active-site Nucleophile is the Ser-101. His-126 is an active-site residue.

This sequence belongs to the peptidase S14 family. Component of the chloroplastic Clp protease core complex.

The protein localises to the plastid. It localises to the chloroplast stroma. The catalysed reaction is Hydrolysis of proteins to small peptides in the presence of ATP and magnesium. alpha-casein is the usual test substrate. In the absence of ATP, only oligopeptides shorter than five residues are hydrolyzed (such as succinyl-Leu-Tyr-|-NHMec, and Leu-Tyr-Leu-|-Tyr-Trp, in which cleavage of the -Tyr-|-Leu- and -Tyr-|-Trp bonds also occurs).. Its function is as follows. Cleaves peptides in various proteins in a process that requires ATP hydrolysis. Has a chymotrypsin-like activity. Plays a major role in the degradation of misfolded proteins. The polypeptide is ATP-dependent Clp protease proteolytic subunit (Platanus occidentalis (Sycamore)).